The chain runs to 120 residues: NAD(P)H-quinone oxidoreductase subunit 3, chloroplastic (120 aa).

3 helical membrane passes run 9–29 (IFWA…LISG), 64–84 (MFAL…PWAM), and 88–108 (VLGV…ILGL).

Belongs to the complex I subunit 3 family. In terms of assembly, NDH is composed of at least 16 different subunits, 5 of which are encoded in the nucleus.

It localises to the plastid. Its subcellular location is the chloroplast thylakoid membrane. The catalysed reaction is a plastoquinone + NADH + (n+1) H(+)(in) = a plastoquinol + NAD(+) + n H(+)(out). It catalyses the reaction a plastoquinone + NADPH + (n+1) H(+)(in) = a plastoquinol + NADP(+) + n H(+)(out). NDH shuttles electrons from NAD(P)H:plastoquinone, via FMN and iron-sulfur (Fe-S) centers, to quinones in the photosynthetic chain and possibly in a chloroplast respiratory chain. The immediate electron acceptor for the enzyme in this species is believed to be plastoquinone. Couples the redox reaction to proton translocation, and thus conserves the redox energy in a proton gradient. The polypeptide is NAD(P)H-quinone oxidoreductase subunit 3, chloroplastic (Lobularia maritima (Sweet alyssum)).